We begin with the raw amino-acid sequence, 765 residues long: MASHIVGYPRMGPKRELKFALESFWDGKSTAEDLQKVSADLRSSIWKQMSAAGTKFIPSNTFAHYDQVLDTTAMLGAVPPRYGYTGGEIGLDVYFSMARGNASVPAMEMTKWFDTNYHYIVPELGPEVNFSYASHKAVNEYKEAKALGVDTVPVLVGPVSYLLLSKAAKGVDKSFELLSLLPKILPIYKEVITELKAAGATWIQLDEPVLVMDLEGQKLQAFTGAYAELESTLSGLNVLVETYFADIPAEAYKTLTSLKGVTAFGFDLVRGTKTLDLVKAGFPEGKYLFAGVVDGRNIWANDFAASLSTLQALEGIVGKDKLVVSTSCSLLHTAVDLINETKLDDEIKSWLAFAAQKVVEVNALAKALAGQKDEALFSANAAALASRRSSPRVTNEGVQKAAAALKGSDHRRATNVSARLDAQQKKLNLPILPTTTIGSFPQTVELRRVRREYKAKKVSEEDYVKAIKEEIKKVVDLQEELDIDVLVHGEPERNDMVEYFGEQLSGFAFTANGWVQSYGSRCVKPPVIYGDVSRPKAMTVFWSAMAQSMTSRPMKGMLTGPVTILNWSFVRNDQPRHETCYQIALAIKDEVEDLEKGGIGVIQIDEAALREGLPLRKSEHAFYLDWAVHSFRITNCGVQDSTQIHTHMCYSHFNDIIHSIIDMDADVITIENSRSDEKLLSVFREGVKYGAGIGPGVYDIHSPRIPSSEEIADRVNKMLAVLEQNILWVNPDCGLKTRKYTEVKPALKNMVDAAKLIRSQLASAK.

2 residues coordinate 5-methyltetrahydropteroyltri-L-glutamate: lysine 18 and asparagine 116. An L-homocysteine-binding site is contributed by 437 to 439; sequence IGS. L-methionine is bound by residues 437-439 and glutamate 490; that span reads IGS. Residues 521-522 and tryptophan 567 contribute to the 5-methyltetrahydropteroyltri-L-glutamate site; that span reads RC. Aspartate 605 contributes to the L-homocysteine binding site. Aspartate 605 contacts L-methionine. 5 residues coordinate Zn(2+): histidine 647, cysteine 649, histidine 658, aspartate 662, and glutamate 671. The active-site Proton donor is histidine 701. A Zn(2+)-binding site is contributed by cysteine 733.

Belongs to the vitamin-B12 independent methionine synthase family. Zn(2+) serves as cofactor. As to expression, expressed in leaves, stems, flowers, siliques and seeds.

The protein resides in the cytoplasm. The protein localises to the cytosol. It catalyses the reaction 5-methyltetrahydropteroyltri-L-glutamate + L-homocysteine = tetrahydropteroyltri-L-glutamate + L-methionine. The protein operates within amino-acid biosynthesis; L-methionine biosynthesis via de novo pathway; L-methionine from L-homocysteine (MetE route): step 1/1. Its function is as follows. Catalyzes the transfer of a methyl group from 5-methyltetrahydrofolate to homocysteine resulting in methionine formation. The polypeptide is 5-methyltetrahydropteroyltriglutamate--homocysteine methyltransferase 1 (MS1) (Arabidopsis thaliana (Mouse-ear cress)).